Reading from the N-terminus, the 270-residue chain is Phospholysine phosphohistidine inorganic pyrophosphate phosphatase (270 aa).

Mg(2+) contacts are provided by Asp-17 and Ser-19. Residues 17–19 (DIS), 54–55 (TN), and Lys-189 each bind substrate. Asp-214 lines the Mg(2+) pocket.

Belongs to the HAD-like hydrolase superfamily. Homodimer. Requires Mg(2+) as cofactor.

It is found in the cytoplasm. The protein localises to the nucleus. The catalysed reaction is diphosphate + H2O = 2 phosphate + H(+). Its function is as follows. Phosphatase that hydrolyzes imidodiphosphate, 3-phosphohistidine and 6-phospholysine. Has broad substrate specificity and can also hydrolyze inorganic diphosphate, but with lower efficiency. The chain is Phospholysine phosphohistidine inorganic pyrophosphate phosphatase (Lhpp) from Mus musculus (Mouse).